A 1479-amino-acid polypeptide reads, in one-letter code: Chromosome partition protein MukB (1479 aa).

ATP is bound at residue 34-41; sequence GGNGAGKS. Coiled coils occupy residues 337–418, 511–603, 780–810, 847–1116, and 1206–1265; these read LNLV…QYQQ, QAER…RAPV, RAAR…DVQK, ELDR…AKAG, and DDPV…LQAV. Residues 666-783 are flexible hinge; it reads PGGSEDPRLN…EVPLFGRAAR (118 aa).

This sequence belongs to the SMC family. MukB subfamily. As to quaternary structure, homodimerization via its hinge domain. Binds to DNA via its C-terminal region. Interacts, and probably forms a ternary complex, with MukE and MukF via its C-terminal region. The complex formation is stimulated by calcium or magnesium. Interacts with tubulin-related protein FtsZ.

It is found in the cytoplasm. It localises to the nucleoid. In terms of biological role, plays a central role in chromosome condensation, segregation and cell cycle progression. Functions as a homodimer, which is essential for chromosome partition. Involved in negative DNA supercoiling in vivo, and by this means organize and compact chromosomes. May achieve or facilitate chromosome segregation by condensation DNA from both sides of a centrally located replisome during cell division. This is Chromosome partition protein MukB from Pectobacterium carotovorum subsp. carotovorum (strain PC1).